Reading from the N-terminus, the 173-residue chain is Protein-export protein SecB 1 (173 aa).

This sequence belongs to the SecB family. As to quaternary structure, homotetramer, a dimer of dimers. One homotetramer interacts with 1 SecA dimer.

It is found in the cytoplasm. In terms of biological role, one of the proteins required for the normal export of preproteins out of the cell cytoplasm. It is a molecular chaperone that binds to a subset of precursor proteins, maintaining them in a translocation-competent state. It also specifically binds to its receptor SecA. This chain is Protein-export protein SecB 1, found in Gluconobacter oxydans (strain 621H) (Gluconobacter suboxydans).